The sequence spans 360 residues: tRNA (guanine-N(7)-)-methyltransferase (360 aa).

The interval 1–32 (MTPPPPKRQKRDEYRKATAEAASQPGPSDVAE) is disordered. Residues glycine 99 and 122 to 123 (EI) each bind S-adenosyl-L-methionine. The segment at 177-196 (ADAASPVLSTDTEHTPTTLV) is disordered. A compositionally biased stretch (polar residues) spans 183–196 (VLSTDTEHTPTTLV). Residues 209–210 (NT) and cysteine 229 each bind S-adenosyl-L-methionine. Aspartate 232 is a catalytic residue. 332–334 (TEE) serves as a coordination point for S-adenosyl-L-methionine.

Belongs to the class I-like SAM-binding methyltransferase superfamily. TrmB family. Forms a complex with trm82.

It localises to the nucleus. The enzyme catalyses guanosine(46) in tRNA + S-adenosyl-L-methionine = N(7)-methylguanosine(46) in tRNA + S-adenosyl-L-homocysteine. It functions in the pathway tRNA modification; N(7)-methylguanine-tRNA biosynthesis. Catalyzes the formation of N(7)-methylguanine at position 46 (m7G46) in tRNA. This Neosartorya fischeri (strain ATCC 1020 / DSM 3700 / CBS 544.65 / FGSC A1164 / JCM 1740 / NRRL 181 / WB 181) (Aspergillus fischerianus) protein is tRNA (guanine-N(7)-)-methyltransferase (trm8).